Consider the following 251-residue polypeptide: Haloacid dehalogenase-like hydrolase domain-containing protein 3 (251 aa).

N6-acetyllysine; alternate is present on lysine 15. N6-succinyllysine; alternate is present on lysine 15.

It belongs to the HAD-like hydrolase superfamily.

In Homo sapiens (Human), this protein is Haloacid dehalogenase-like hydrolase domain-containing protein 3 (HDHD3).